Reading from the N-terminus, the 206-residue chain is Sec-independent protein translocase protein TatB (206 aa).

Residues 1–21 (MFDIGWTELLVIAVVLIVVVG) form a helical membrane-spanning segment. The tract at residues 104–206 (ENKTEVPSAA…VQTKKKKDEA (103 aa)) is disordered. The span at 110 to 124 (PSAAMSAPTPSMSLP) shows a compositional bias: low complexity. Residues 125 to 138 (ETPPVVPTPAPAPE) show a composition bias toward pro residues. Low complexity-rich tracts occupy residues 139-151 (PAAVAAETVAAKP) and 187-196 (ARKPAAPKTP).

This sequence belongs to the TatB family. As to quaternary structure, the Tat system comprises two distinct complexes: a TatABC complex, containing multiple copies of TatA, TatB and TatC subunits, and a separate TatA complex, containing only TatA subunits. Substrates initially bind to the TatABC complex, which probably triggers association of the separate TatA complex to form the active translocon.

The protein localises to the cell inner membrane. Part of the twin-arginine translocation (Tat) system that transports large folded proteins containing a characteristic twin-arginine motif in their signal peptide across membranes. Together with TatC, TatB is part of a receptor directly interacting with Tat signal peptides. TatB may form an oligomeric binding site that transiently accommodates folded Tat precursor proteins before their translocation. The polypeptide is Sec-independent protein translocase protein TatB (Rhizobium etli (strain ATCC 51251 / DSM 11541 / JCM 21823 / NBRC 15573 / CFN 42)).